The sequence spans 381 residues: Neutral protease 2 homolog mep20 (381 aa).

Residues 1–19 (MRFTALASAILPLACNVLA) form the signal peptide. Positions 20-193 (LPAKTGEAPK…ASAVKPLDKR (174 aa)) are excised as a propeptide. 2 cysteine pairs are disulfide-bonded: Cys-199/Cys-271 and Cys-278/Cys-296. His-321 provides a ligand contact to Zn(2+). Glu-322 is a catalytic residue. Residues His-325 and Asp-336 each contribute to the Zn(2+) site.

The protein belongs to the peptidase M35 family. Zn(2+) serves as cofactor.

It carries out the reaction Preferential cleavage of bonds with hydrophobic residues in P1'. Also 3-Asn-|-Gln-4 and 8-Gly-|-Ser-9 bonds in insulin B chain.. In terms of biological role, secreted metalloproteinase that allows assimilation of proteinaceous substrates. Shows high activities on basic nuclear substrates such as histone and protamine. The polypeptide is Neutral protease 2 homolog mep20 (mep20) (Aspergillus flavus).